The sequence spans 36 residues: MLCCSASVKFSNGLQLSLLICACLLAVLIVSFCRRR.

The chain crosses the membrane as a helical span at residues glycine 13–cysteine 33.

It localises to the host membrane. In Vitis vinifera (Grape), this protein is Protein P4.